Consider the following 542-residue polypeptide: MAKQLLFDDTARKALERGVDALANAVKVTLGPKGRNVVIDKKWGAPTITNDGVTIAREVELDDPYENLGAQLAKEVATKTNDVAGDGTTTATVLAQALVHEGLRNVAAGAAPSGLKRGIDAAVDAVSDQLLSMARDVDGKGDIAHVATISAQDPAVGELLADAFDKVGKDGVITVEESSTTALELDFTEGMQFDKGYISPYFVTDAERQEAVLEDAYVLVHQGKISTVQDLLPLLEKVLKAAKPLLIIAEDVDGEALSTLVVNKIRGTFNAVAVKAPGFGDRRKAILQDIATLTGAQVVAEEVGLKLDQIDLDALGTARRITVTKDDTTIVDGAGSSEDIAGRVAQIKAEVERTDSDWDREKLQERLAKLSGGVVVIKVGAHTEVELKEKKHRIEDAVSATRAAIEEGIVAGGGSALVHAVSVLEDNLGRTGDEATGVALVRKAASEPLRWIAENAGLEGYVVVEKVRSLEVGSGLNAATGEYVDLLAAGVLDPVKVTRSALRNAASIASMVLTTDTLVVDKKEEDLAVNGGGHGHGHGHGH.

Residues 29–32 (TLGP), 86–90 (DGTTT), Gly-413, 477–479 (NAA), and Asp-493 contribute to the ATP site.

Belongs to the chaperonin (HSP60) family. Forms a cylinder of 14 subunits composed of two heptameric rings stacked back-to-back. Interacts with the co-chaperonin GroES.

The protein localises to the cytoplasm. It catalyses the reaction ATP + H2O + a folded polypeptide = ADP + phosphate + an unfolded polypeptide.. Its function is as follows. Together with its co-chaperonin GroES, plays an essential role in assisting protein folding. The GroEL-GroES system forms a nano-cage that allows encapsulation of the non-native substrate proteins and provides a physical environment optimized to promote and accelerate protein folding. The protein is Chaperonin GroEL 1 of Kineococcus radiotolerans (strain ATCC BAA-149 / DSM 14245 / SRS30216).